Consider the following 201-residue polypeptide: UPF0301 protein RHECIAT_CH0001061 (201 aa).

Belongs to the UPF0301 (AlgH) family.

This Rhizobium etli (strain CIAT 652) protein is UPF0301 protein RHECIAT_CH0001061.